A 146-amino-acid chain; its full sequence is Cyanate hydratase (146 aa).

Residues Arg87, Glu90, and Ser113 contribute to the active site.

Belongs to the cyanase family.

It carries out the reaction cyanate + hydrogencarbonate + 3 H(+) = NH4(+) + 2 CO2. Functionally, catalyzes the reaction of cyanate with bicarbonate to produce ammonia and carbon dioxide. The protein is Cyanate hydratase of Pseudomonas putida (strain ATCC 700007 / DSM 6899 / JCM 31910 / BCRC 17059 / LMG 24140 / F1).